The following is a 172-amino-acid chain: Shikimate kinase (172 aa).

11-16 (GAGKST) provides a ligand contact to ATP. Position 15 (serine 15) interacts with Mg(2+). Positions 33, 57, and 79 each coordinate substrate. Arginine 117 is a binding site for ATP. Arginine 136 provides a ligand contact to substrate. Arginine 153 provides a ligand contact to ATP.

Belongs to the shikimate kinase family. In terms of assembly, monomer. Requires Mg(2+) as cofactor.

It is found in the cytoplasm. It carries out the reaction shikimate + ATP = 3-phosphoshikimate + ADP + H(+). The protein operates within metabolic intermediate biosynthesis; chorismate biosynthesis; chorismate from D-erythrose 4-phosphate and phosphoenolpyruvate: step 5/7. In terms of biological role, catalyzes the specific phosphorylation of the 3-hydroxyl group of shikimic acid using ATP as a cosubstrate. The sequence is that of Shikimate kinase from Pseudomonas putida (strain ATCC 700007 / DSM 6899 / JCM 31910 / BCRC 17059 / LMG 24140 / F1).